Reading from the N-terminus, the 394-residue chain is RNA-binding motif protein, X-linked-like-2 (394 aa).

The 79-residue stretch at 8–86 folds into the RRM domain; it reads GKLFIGGLNL…KAIKVAQATK (79 aa). A compositionally biased stretch (basic and acidic residues) spans 67–78; it reads RDMNGKSLDGKA. Residues 67-394 form a disordered region; the sequence is RDMNGKSLDG…MERGGGRSRY (328 aa). Residues 150 to 165 show a composition bias toward pro residues; that stretch reads RGPPPPPRRAGPPPKR. 2 stretches are compositionally biased toward basic and acidic residues: residues 196–231 and 239–285; these read PRRE…REPR and EYTH…REPF. Low complexity predominate over residues 321–333; it reads YSGGRDSYSSSYG. 2 stretches are compositionally biased toward basic and acidic residues: residues 334–350 and 383–394; these read RSDR…RPDR and GRMERGGGRSRY.

It is found in the nucleus. The protein is RNA-binding motif protein, X-linked-like-2 (RBMXL2) of Macaca fascicularis (Crab-eating macaque).